Reading from the N-terminus, the 192-residue chain is Orotate phosphoribosyltransferase (192 aa).

5-phospho-alpha-D-ribose 1-diphosphate-binding positions include arginine 84, lysine 88, and 110 to 118 (DDVLTTGNS). Orotate contacts are provided by threonine 114 and arginine 142.

Belongs to the purine/pyrimidine phosphoribosyltransferase family. PyrE subfamily. As to quaternary structure, homodimer. It depends on Mg(2+) as a cofactor.

It carries out the reaction orotidine 5'-phosphate + diphosphate = orotate + 5-phospho-alpha-D-ribose 1-diphosphate. The protein operates within pyrimidine metabolism; UMP biosynthesis via de novo pathway; UMP from orotate: step 1/2. Its function is as follows. Catalyzes the transfer of a ribosyl phosphate group from 5-phosphoribose 1-diphosphate to orotate, leading to the formation of orotidine monophosphate (OMP). The polypeptide is Orotate phosphoribosyltransferase (Pyrobaculum calidifontis (strain DSM 21063 / JCM 11548 / VA1)).